Reading from the N-terminus, the 110-residue chain is Small ribosomal subunit protein bS16 (110 aa).

The interval 87–110 (ARNNPEKAVPRKERKAAAEAAAKK) is disordered.

It belongs to the bacterial ribosomal protein bS16 family.

The protein is Small ribosomal subunit protein bS16 of Rhodopseudomonas palustris (strain BisA53).